The chain runs to 66 residues: ATP synthase F(0) complex subunit 8 (66 aa).

At Met1 the chain carries N-formylmethionine. A helical transmembrane segment spans residues 8–24; sequence TWLTMILSMFLTLFIIF. The residue at position 54 (Lys54) is an N6-acetyllysine; alternate. An N6-succinyllysine; alternate modification is found at Lys54. An N6-acetyllysine modification is found at Lys57.

It belongs to the ATPase protein 8 family. Component of the ATP synthase complex composed at least of ATP5F1A/subunit alpha, ATP5F1B/subunit beta, ATP5MC1/subunit c (homooctomer), MT-ATP6/subunit a, MT-ATP8/subunit 8, ATP5ME/subunit e, ATP5MF/subunit f, ATP5MG/subunit g, ATP5MK/subunit k, ATP5MJ/subunit j, ATP5F1C/subunit gamma, ATP5F1D/subunit delta, ATP5F1E/subunit epsilon, ATP5PF/subunit F6, ATP5PB/subunit b, ATP5PD/subunit d, ATP5PO/subunit OSCP. ATP synthase complex consists of a soluble F(1) head domain (subunits alpha(3) and beta(3)) - the catalytic core - and a membrane F(0) domain - the membrane proton channel (subunits c, a, 8, e, f, g, k and j). These two domains are linked by a central stalk (subunits gamma, delta, and epsilon) rotating inside the F1 region and a stationary peripheral stalk (subunits F6, b, d, and OSCP). Interacts with PRICKLE3.

It is found in the mitochondrion membrane. Subunit 8, of the mitochondrial membrane ATP synthase complex (F(1)F(0) ATP synthase or Complex V) that produces ATP from ADP in the presence of a proton gradient across the membrane which is generated by electron transport complexes of the respiratory chain. ATP synthase complex consist of a soluble F(1) head domain - the catalytic core - and a membrane F(1) domain - the membrane proton channel. These two domains are linked by a central stalk rotating inside the F(1) region and a stationary peripheral stalk. During catalysis, ATP synthesis in the catalytic domain of F(1) is coupled via a rotary mechanism of the central stalk subunits to proton translocation. In vivo, can only synthesize ATP although its ATP hydrolase activity can be activated artificially in vitro. Part of the complex F(0) domain. The chain is ATP synthase F(0) complex subunit 8 from Bos taurus (Bovine).